The primary structure comprises 310 residues: Basic salivary proline-rich protein 4 (310 aa).

A signal peptide spans 1 to 16 (MLLILLSVALLALSSA). Positions 14–310 (SSAESSSEDV…RPAQGQQPPQ (297 aa)) are disordered. 9 tandem repeats follow at residues 35–55 (KPEG…PPPG), 56–76 (KPQG…PPPG), 77–97 (KPEG…PHPG), 98–118 (KPER…PHPG), 119–139 (KPES…PTPG), 140–160 (KPEG…PPPG), 161–181 (KPEG…PHPG), 182–202 (KPER…PPPG), and 203–223 (KPER…PHPG). Residues 35 to 234 (KPEGRRPQGG…PEGPPPQEGN (200 aa)) form a 9.5 X 21 AA tandem repeats of K-P-[EQ]-[GR]-[PR]-[PR]-P-Q-G-G-N-Q-[PS]-[QH]-[RG]-[PT]-P-P-[PH]-P-G region. Pro residues predominate over residues 48–63 (QRPPPPPGKPQGPPPQ). Residues Asn66, Asn87, and Asn108 are each glycosylated (N-linked (GlcNAc...) asparagine). Positions 133 to 147 (GPPPTPGKPEGPPPQ) are enriched in pro residues. N-linked (GlcNAc...) asparagine glycans are attached at residues Asn150, Asn171, and Asn192. Positions 196–210 (RPPPPPGKPERPPPQ) are enriched in pro residues. Asn213 is a glycosylation site (N-linked (GlcNAc...) asparagine). Residues 217 to 231 (GPPPHPGKPEGPPPQ) show a composition bias toward pro residues. The stretch at 224 to 234 (KPEGPPPQEGN) is one 10; truncated repeat. N-linked (GlcNAc...) asparagine glycosylation occurs at Asn234. Residues 258–310 (QGPPPPGKPQGPPPAGGNPQQPQAPPAGKPQGPPPPPQGGRPPRPAQGQQPPQ) show a composition bias toward pro residues.

Post-translationally, N-glycosylated. Proteolytically cleaved at the tripeptide Xaa-Pro-Gln, where Xaa in the P(3) position is mostly lysine. The endoprotease may be of microbial origin. Pyroglutamate formation found on at least Gln-46, Gln-48, Gln-67, Gln-88; Gln-90; Gln-193; Gln-288 Gln-214 and Gln-295, preferentially in diabetic, and head and neck cancer patients.

It is found in the secreted. The polypeptide is Basic salivary proline-rich protein 4 (PRB4) (Homo sapiens (Human)).